A 476-amino-acid chain; its full sequence is MRIVQVAVEFTPIVKVGGLGDAVASLSKELAKQNDVEVLLPHYPLISKFSSSQVLSERSFYYEFLGKQQASAISYSYEGLTLTIITLDSQIELFSTTSVYSENNVVRFSAFAAAAAAYLQEADPADIVHLHDWHVGLLAGLLKNPLNPVHSKIVFTIHNFGYRGYCSTQLLAASQIDDFHLSHYQLFRDPQTSVLMKGALYCSDYITTVSLTYVQEIINDYSDYELHDAILARNSVFSGIINGIDEDVWNPKTDPALAVQYDASLLSEPDVLFTKKEENRAVLYEKLGISSDYFPLICVISRIVEEKGPEFMKEIILHAMEHSYAFILIGTSQNEVLLNEFRNLQDCLASSPNIRLILDFNDPLARLTYAAADMICIPSHREACGLTQLIAMRYGTVPLVRKTGGLADTVIPGVNGFTFFDTNNFNEFRAMLSNAVTTYRQEPDVWLNLIESGMLRASGLDAMAKHYVNLYQSLLS.

An ADP-alpha-D-glucose-binding site is contributed by Lys-15.

This sequence belongs to the glycosyltransferase 1 family. Bacterial/plant glycogen synthase subfamily.

The catalysed reaction is [(1-&gt;4)-alpha-D-glucosyl](n) + ADP-alpha-D-glucose = [(1-&gt;4)-alpha-D-glucosyl](n+1) + ADP + H(+). It functions in the pathway glycan biosynthesis; glycogen biosynthesis. Functionally, synthesizes alpha-1,4-glucan chains using ADP-glucose. The polypeptide is Glycogen synthase (Chlamydia pneumoniae (Chlamydophila pneumoniae)).